A 362-amino-acid polypeptide reads, in one-letter code: F-box protein At2g14710 (362 aa).

The 47-residue stretch at 1-47 (MAHLKNLPWELIEEILSRVPPKSLVRFRTVSKQWNALFDDKTFINNH) folds into the F-box domain.

In Arabidopsis thaliana (Mouse-ear cress), this protein is F-box protein At2g14710.